The following is a 626-amino-acid chain: Chaperone protein HtpG (626 aa).

Residues 1–339 (MSTNQETRGF…SNDLPLNVSR (339 aa)) are a; substrate-binding. The segment at 340–555 (EILQDNKVTA…NDQMTTQMAK (216 aa)) is b. Residues 556–626 (LFAAAGQPVP…FIKRINKLLG (71 aa)) form a c region.

This sequence belongs to the heat shock protein 90 family. In terms of assembly, homodimer.

The protein resides in the cytoplasm. In terms of biological role, molecular chaperone. Has ATPase activity. The sequence is that of Chaperone protein HtpG from Aggregatibacter actinomycetemcomitans (Actinobacillus actinomycetemcomitans).